Here is a 114-residue protein sequence, read N- to C-terminus: Nucleoid-associated protein Amet_4780 (114 aa).

Positions 23-42 (QKMQKDMEKTQAALEEKEVE) are disordered. The span at 25–42 (MQKDMEKTQAALEEKEVE) shows a compositional bias: basic and acidic residues.

This sequence belongs to the YbaB/EbfC family. In terms of assembly, homodimer.

The protein resides in the cytoplasm. Its subcellular location is the nucleoid. Its function is as follows. Binds to DNA and alters its conformation. May be involved in regulation of gene expression, nucleoid organization and DNA protection. The chain is Nucleoid-associated protein Amet_4780 from Alkaliphilus metalliredigens (strain QYMF).